The chain runs to 394 residues: Elongation factor Tu (394 aa).

Residues 10 to 204 (KPHVNVGTIG…ALDSYIPEPE (195 aa)) enclose the tr-type G domain. The tract at residues 19–26 (GHVDHGKT) is G1. 19 to 26 (GHVDHGKT) is a GTP binding site. Mg(2+) is bound at residue Thr26. Residues 60-64 (GITIS) are G2. Residues 81-84 (DCPG) are G3. Residues 81–85 (DCPGH) and 136–139 (NKCD) contribute to the GTP site. The tract at residues 136 to 139 (NKCD) is G4. The interval 174-176 (SAL) is G5.

The protein belongs to the TRAFAC class translation factor GTPase superfamily. Classic translation factor GTPase family. EF-Tu/EF-1A subfamily. Monomer.

It localises to the cytoplasm. The catalysed reaction is GTP + H2O = GDP + phosphate + H(+). Its function is as follows. GTP hydrolase that promotes the GTP-dependent binding of aminoacyl-tRNA to the A-site of ribosomes during protein biosynthesis. The polypeptide is Elongation factor Tu (Pseudoalteromonas atlantica (strain T6c / ATCC BAA-1087)).